Consider the following 218-residue polypeptide: Small ribosomal subunit protein uS5 (218 aa).

An S5 DRBM domain is found at 55 to 118 (LDHEVIDVSI…RNAKLNIIPV (64 aa)).

Belongs to the universal ribosomal protein uS5 family. As to quaternary structure, part of the 30S ribosomal subunit. Contacts protein S4.

With S4 and S12 plays an important role in translational accuracy. The protein is Small ribosomal subunit protein uS5 of Aeropyrum pernix (strain ATCC 700893 / DSM 11879 / JCM 9820 / NBRC 100138 / K1).